A 201-amino-acid chain; its full sequence is Molybdenum cofactor guanylyltransferase (201 aa).

Residues 15 to 17 (LAG), Lys-28, Asp-74, and Asp-104 contribute to the GTP site. Asp-104 contributes to the Mg(2+) binding site.

The protein belongs to the MobA family. In terms of assembly, monomer. Mg(2+) is required as a cofactor.

Its subcellular location is the cytoplasm. The catalysed reaction is Mo-molybdopterin + GTP + H(+) = Mo-molybdopterin guanine dinucleotide + diphosphate. Its function is as follows. Transfers a GMP moiety from GTP to Mo-molybdopterin (Mo-MPT) cofactor (Moco or molybdenum cofactor) to form Mo-molybdopterin guanine dinucleotide (Mo-MGD) cofactor. In Pseudomonas syringae pv. syringae (strain B728a), this protein is Molybdenum cofactor guanylyltransferase.